A 200-amino-acid polypeptide reads, in one-letter code: Casparian strip membrane protein 1 (200 aa).

Over 1-38 (MSTTIEIPAESSAVAKGKAPLIGASSSSYEKKGGYKKG) the chain is Cytoplasmic. A helical transmembrane segment spans residues 39–59 (IAIFDFILRLGAVISALSAAA). Over 60-88 (TMGTSDETLPFFTQFFQFEAGYDDFPTFQ) the chain is Extracellular. A helical transmembrane segment spans residues 89 to 109 (FFVIAMGFVGGYLVLSLPFSV). Over 110–121 (VAIIRPHAVGIR) the chain is Cytoplasmic. A helical transmembrane segment spans residues 122 to 142 (LLLLILDTVALTLNTAAAAAA). Topologically, residues 143-175 (AAIVYLAHNGNQSANWLAVCQQFGDFCQKVSGG) are extracellular. An N-linked (GlcNAc...) asparagine glycan is attached at Asn153. Residues 176 to 196 (VVASFVSVLVFLLLVVMSAVA) form a helical membrane-spanning segment. The Cytoplasmic segment spans residues 197 to 200 (LRKH).

The protein belongs to the Casparian strip membrane proteins (CASP) family. As to quaternary structure, homodimer and heterodimers.

It localises to the cell membrane. Its function is as follows. Regulates membrane-cell wall junctions and localized cell wall deposition. Required for establishment of the Casparian strip membrane domain (CSD) and the subsequent formation of Casparian strips, a cell wall modification of the root endodermis that determines an apoplastic barrier between the intraorganismal apoplasm and the extraorganismal apoplasm and prevents lateral diffusion. The polypeptide is Casparian strip membrane protein 1 (Ricinus communis (Castor bean)).